Here is a 252-residue protein sequence, read N- to C-terminus: Cell division protein ZapD (252 aa).

Belongs to the ZapD family. Interacts with FtsZ.

The protein resides in the cytoplasm. Functionally, cell division factor that enhances FtsZ-ring assembly. Directly interacts with FtsZ and promotes bundling of FtsZ protofilaments, with a reduction in FtsZ GTPase activity. This Cupriavidus metallidurans (strain ATCC 43123 / DSM 2839 / NBRC 102507 / CH34) (Ralstonia metallidurans) protein is Cell division protein ZapD.